Here is an 831-residue protein sequence, read N- to C-terminus: Prolactin receptor (831 aa).

A signal peptide spans 1-23 (MKQDLISSVQIILFLPLTTVGLA). The Extracellular portion of the chain corresponds to 24–438 (GQSFPGKPKI…QIPNDFRVKD (415 aa)). 4 consecutive Fibronectin type-III domains span residues 30–128 (KPKI…VQPG), 129–227 (SPVN…IPSG), 230–331 (PPEK…VQPD), and 332–433 (PPVN…IPND). A disulfide bridge connects residues cysteine 36 and cysteine 46. Asparagine 59 is a glycosylation site (N-linked (GlcNAc...) asparagine). Residues cysteine 75 and cysteine 86 are joined by a disulfide bond. N-linked (GlcNAc...) asparagine glycans are attached at residues asparagine 91, asparagine 100, asparagine 112, asparagine 132, asparagine 262, asparagine 303, asparagine 315, and asparagine 335. Zn(2+) contacts are provided by aspartate 414 and histidine 416. A WSXWS motif motif is present at residues 419-423 (WSEWS). The helical transmembrane segment at 439–459 (MIVWIVLGVLSSLICLIMSWT) threads the bilayer. Residues 460–831 (MVLKGYRMIT…DPSSFMPSFK (372 aa)) are Cytoplasmic-facing. Residues 471 to 479 (MLPPVPGPK) carry the Box 1 motif motif. Disordered stretches follow at residues 527-563 (QQLM…SPSL), 774-796 (RVPH…QQGQ), and 808-831 (PSDC…PSFK). The segment covering 787–796 (ETSQSLQQGQ) has biased composition (polar residues).

This sequence belongs to the type I cytokine receptor family. Type 1 subfamily.

The protein localises to the membrane. In terms of biological role, this is a receptor for the anterior pituitary hormone prolactin. This chain is Prolactin receptor (PRLR), found in Gallus gallus (Chicken).